The chain runs to 82 residues: Quinohemoprotein amine dehydrogenase subunit gamma (82 aa).

Positions 7 to 16 (CTTSFDPGWE) form a cross-link, 4-cysteinyl-glutamic acid (Cys-Glu). Cross-links (3-cysteinyl-aspartic acid (Cys-Asp)) lie at residues 27–33 (CQPMEAD) and 41–49 (CWWPAQVAD). The active-site Proton acceptor is the Asp-33. A cross-link (4'-cysteinyl-tryptophylquinone (Cys-Trp)) is located at residues 37-43 (CADPCWW). Trp-43 is subject to Tryptophylquinone.

This sequence belongs to the quinohemoprotein amine dehydrogenase subunit gamma family. Heterotrimer of an alpha, a beta and a gamma subunit. It depends on cysteine tryptophylquinone residue as a cofactor. In terms of processing, the cysteine tryptophylquinone (CTQ) is generated by oxidation of the indole ring of a tryptophan residue to form tryptophylquinone, followed by covalent cross-linking with a cysteine residue.

It localises to the periplasm. It catalyses the reaction 2 Fe(III)-[cytochrome c550] + an aliphatic amine + H2O = 2 Fe(II)-[cytochrome c550] + an aldehyde + NH4(+) + 2 H(+). Inhibited by carbonyl reagents such as hydrazine, hydroxylamine, phenylhydrazine and semicarbazide. Catalyzes the oxidative deamination of a wide range of primary aliphatic and aromatic amines. The physiological electron acceptor is the constitutive cytochrome c550. The protein is Quinohemoprotein amine dehydrogenase subunit gamma (qhnDH) of Paracoccus denitrificans.